Reading from the N-terminus, the 748-residue chain is Chondroadherin-like protein (748 aa).

The N-terminal stretch at 1-29 (MERPQSSIWVFMLLLFMVLLQSPAWHVAA) is a signal peptide. The LRRNT 1 domain maps to 30 to 61 (QRCPQTCVCDNSRRHVTCRHQNLTEVPNTIPE). The N-linked (GlcNAc...) asparagine glycan is linked to N51. 9 LRR repeats span residues 85 to 107 (PHLTHLDLRNCQVEMVAEGAFRG), 108 to 131 (LGRLLLLNLASNRLSTLPQEALDG), 132 to 155 (LGSLRRLELEGNMLEELRPGTFGA), 156 to 179 (LGSLTTLNLAHNALVYLPAMAFQG), 181 to 203 (LRTRWLQLSHNALSVLAPEALAG), 204 to 227 (LPALRRLSLHHNELQALPGAALSQ), 229 to 252 (RSLARLELGHNPLTYTGEEDGLAL), 253 to 275 (PGLRELALDHGSLQALGPRAFAH), and 276 to 299 (CPRLHTLDLRGNQLTTLPPLQVPG). The LRRCT 1 domain occupies 309 to 357 (NPLWCACHARPLLEWLVRARVRSDGACRGPRRLRGEALDTLRPSDLRCP). The segment at 352 to 389 (SDLRCPGDAAAGDGDGDEDEDRPAGPRAPPLRSPHGEA) is disordered. Residues 394–428 (PCPPACACVAETRHSTCDGRGLQAVPRGFPNDTQL) form the LRRNT 2 domain. C395 and C410 are oxidised to a cystine. 10 LRR repeats span residues 423–446 (PNDTQLLDLRRNHFPSVPRAAFPG), 448–470 (RHLVSLHLQHCGVAELEPGALAG), 471–494 (LDRLLYLYLSHNQLSGLSAAALEG), 496–518 (PNLGYLYLEHNRFLRIPGTALRA), 519–542 (LPTLVSLHLQDNAVDRLAPGDLAG), 544–566 (RALRCLYLSGNHITQVSPGALGP), 567–590 (ARELEKLHLDRNRLREVPTGALEG), 591–614 (LPALKELQLSGNPLRALPDGAFQP), 616–639 (GRSLQQLFLNSSDLEQISPRAFSG), and 641–665 (GKGLRSLYLHKNQLQSLPAPLGLSG). N625 carries N-linked (GlcNAc...) asparagine glycosylation. An LRRCT 2 domain is found at 674 to 722 (NPFHCDCQLLPLHRWLTGLNLRVGATCATPPSVRGQKVKVAAPVFEACP). Disulfide bonds link C678–C721 and C680–C700. The segment at 728–748 (KAKRTPTSRGSARRTPSLSRH) is disordered. Polar residues predominate over residues 734 to 748 (TSRGSARRTPSLSRH).

The protein belongs to the small leucine-rich proteoglycan (SLRP) family. SLRP class IV subfamily. In terms of assembly, associates with collagen and binds to collagen fibrils. Expressed in cartilage, including articular knee cartilage, where it localizes to the extracellular space in the area immediately surrounding the chondrocytes, not detected in any other tissues (at protein level).

Its subcellular location is the secreted. It is found in the extracellular space. It localises to the extracellular matrix. In terms of biological role, potential negative modulator of chondrocyte differentiation. Inhibits collagen fibrillogenesis in vitro. May influence chondrocyte's differentiation by acting on its cellular collagenous microenvironment. The polypeptide is Chondroadherin-like protein (Chadl) (Mus musculus (Mouse)).